The sequence spans 364 residues: UDP-N-acetylglucosamine--N-acetylmuramyl-(pentapeptide) pyrophosphoryl-undecaprenol N-acetylglucosamine transferase (364 aa).

UDP-N-acetyl-alpha-D-glucosamine-binding positions include 10-12 (TGG), N124, R166, S196, and Q297.

It belongs to the glycosyltransferase 28 family. MurG subfamily.

It localises to the cell membrane. It carries out the reaction di-trans,octa-cis-undecaprenyl diphospho-N-acetyl-alpha-D-muramoyl-L-alanyl-D-glutamyl-meso-2,6-diaminopimeloyl-D-alanyl-D-alanine + UDP-N-acetyl-alpha-D-glucosamine = di-trans,octa-cis-undecaprenyl diphospho-[N-acetyl-alpha-D-glucosaminyl-(1-&gt;4)]-N-acetyl-alpha-D-muramoyl-L-alanyl-D-glutamyl-meso-2,6-diaminopimeloyl-D-alanyl-D-alanine + UDP + H(+). It participates in cell wall biogenesis; peptidoglycan biosynthesis. Its function is as follows. Cell wall formation. Catalyzes the transfer of a GlcNAc subunit on undecaprenyl-pyrophosphoryl-MurNAc-pentapeptide (lipid intermediate I) to form undecaprenyl-pyrophosphoryl-MurNAc-(pentapeptide)GlcNAc (lipid intermediate II). The chain is UDP-N-acetylglucosamine--N-acetylmuramyl-(pentapeptide) pyrophosphoryl-undecaprenol N-acetylglucosamine transferase from Thermoanaerobacter pseudethanolicus (strain ATCC 33223 / 39E) (Clostridium thermohydrosulfuricum).